We begin with the raw amino-acid sequence, 486 residues long: B-type cell cycle switch protein ccs52B (486 aa).

Positions 24-36 (RLETLSTPPSSAS) match the PEST motif motif. Over residues 27–36 (TLSTPPSSAS) the composition is skewed to polar residues. The segment at 27–57 (TLSTPPSSASPRAISNLSSTPSPSKSSKCSD) is disordered. Positions 41–53 (SNLSSTPSPSKSS) are enriched in low complexity. The C-box signature appears at 57–63 (DRFIPCR). Positions 87-98 (AYNRLLKSELFG) match the CSM motif motif. WD repeat units lie at residues 177–214 (QDDFYLNLVDWSSQNTLAVGLGTCVYLWSASNSKVTKL), 218–257 (GPYDGVCSVQWTKEGSFISIGTNGGQVQIWDGTKCKKVRT), 260–297 (GHQTRTGVLAWNSRILASGSRDRNILQHDMRVPSDFIG), 301–340 (GHKSEVCGLKWSCDDRELASGGNDNQLLVWNQHSQQPTLR), 343–385 (EHTA…QLNS), 387–428 (DTGS…KVAT), and 431–470 (GHSMRVLYLAMSPDGQTIVTGAGDETLRFWNVFPSMKTPA).

The protein belongs to the WD repeat CDC20/Fizzy family. Mostly expressed in shoot apices and, to a lower extent, in roots, especially in root tips, and in hypocotyls. Expressed in nodulation-competent root zone but not in the nodules.

It functions in the pathway protein modification; protein ubiquitination. Component of the anaphase promoting complex/cyclosome (APC/C), a cell cycle-regulated E3 ubiquitin-protein ligase complex that controls progression through mitosis and the G1 phase of the cell cycle. This Medicago truncatula (Barrel medic) protein is B-type cell cycle switch protein ccs52B.